A 189-amino-acid polypeptide reads, in one-letter code: Transcriptional repressor NrdR (189 aa).

A zinc finger lies at 3–34 (CPFCRGDDSRVVDSREVEDGQAIRRRRSCSGC). The region spanning 46–136 (LSVVKRSGVT…VYRAFSSVED (91 aa)) is the ATP-cone domain. Positions 152-189 (RLPEGPEAAQGGPESKAGNGQAAGSGDPEGVKAEKSSE) are disordered. Residues 180 to 189 (EGVKAEKSSE) show a composition bias toward basic and acidic residues.

Belongs to the NrdR family. It depends on Zn(2+) as a cofactor.

In terms of biological role, negatively regulates transcription of bacterial ribonucleotide reductase nrd genes and operons by binding to NrdR-boxes. This Saccharopolyspora erythraea (strain ATCC 11635 / DSM 40517 / JCM 4748 / NBRC 13426 / NCIMB 8594 / NRRL 2338) protein is Transcriptional repressor NrdR.